Reading from the N-terminus, the 146-residue chain is Chorion class A protein Ld3/Ld29 (146 aa).

Positions 1–21 are cleaved as a signal peptide; sequence MNTFALLSVFIQACLVQSVFS.

It belongs to the chorion protein family.

This protein is one of many from the eggshell of the gypsy moth. The chain is Chorion class A protein Ld3/Ld29 from Lymantria dispar (Gypsy moth).